The sequence spans 134 residues: Ribosome-binding factor A (134 aa).

It belongs to the RbfA family. In terms of assembly, monomer. Binds 30S ribosomal subunits, but not 50S ribosomal subunits or 70S ribosomes.

It is found in the cytoplasm. One of several proteins that assist in the late maturation steps of the functional core of the 30S ribosomal subunit. Associates with free 30S ribosomal subunits (but not with 30S subunits that are part of 70S ribosomes or polysomes). Required for efficient processing of 16S rRNA. May interact with the 5'-terminal helix region of 16S rRNA. The protein is Ribosome-binding factor A of Cyanothece sp. (strain PCC 7425 / ATCC 29141).